The following is an 82-amino-acid chain: ATP synthase subunit c (82 aa).

Helical transmembrane passes span 5-25 (IASA…IGPG) and 57-77 (LAFM…LLFA).

Belongs to the ATPase C chain family. As to quaternary structure, F-type ATPases have 2 components, F(1) - the catalytic core - and F(0) - the membrane proton channel. F(1) has five subunits: alpha(3), beta(3), gamma(1), delta(1), epsilon(1). F(0) has four main subunits: a(1), b(1), b'(1) and c(10-14). The alpha and beta chains form an alternating ring which encloses part of the gamma chain. F(1) is attached to F(0) by a central stalk formed by the gamma and epsilon chains, while a peripheral stalk is formed by the delta, b and b' chains.

Its subcellular location is the cellular thylakoid membrane. Functionally, f(1)F(0) ATP synthase produces ATP from ADP in the presence of a proton or sodium gradient. F-type ATPases consist of two structural domains, F(1) containing the extramembraneous catalytic core and F(0) containing the membrane proton channel, linked together by a central stalk and a peripheral stalk. During catalysis, ATP synthesis in the catalytic domain of F(1) is coupled via a rotary mechanism of the central stalk subunits to proton translocation. In terms of biological role, key component of the F(0) channel; it plays a direct role in translocation across the membrane. A homomeric c-ring of between 10-14 subunits forms the central stalk rotor element with the F(1) delta and epsilon subunits. The chain is ATP synthase subunit c from Cyanothece sp. (strain PCC 7425 / ATCC 29141).